Consider the following 256-residue polypeptide: Pimeloyl-[acyl-carrier protein] methyl ester esterase (256 aa).

In terms of domain architecture, AB hydrolase-1 spans 15–242; it reads HLVLLHGWGL…AAHAPFISHP (228 aa). Residues W22, 82 to 83, and 143 to 147 contribute to the substrate site; these read SL and FLALQ. S82 functions as the Nucleophile in the catalytic mechanism. Active-site residues include D207 and H235. Residue H235 coordinates substrate.

Belongs to the AB hydrolase superfamily. Carboxylesterase BioH family. As to quaternary structure, monomer.

The protein localises to the cytoplasm. It carries out the reaction 6-carboxyhexanoyl-[ACP] methyl ester + H2O = 6-carboxyhexanoyl-[ACP] + methanol + H(+). The protein operates within cofactor biosynthesis; biotin biosynthesis. The physiological role of BioH is to remove the methyl group introduced by BioC when the pimeloyl moiety is complete. It allows to synthesize pimeloyl-ACP via the fatty acid synthetic pathway through the hydrolysis of the ester bonds of pimeloyl-ACP esters. In Escherichia coli O81 (strain ED1a), this protein is Pimeloyl-[acyl-carrier protein] methyl ester esterase.